A 34-amino-acid polypeptide reads, in one-letter code: Photosystem II reaction center protein M (34 aa).

The helical transmembrane segment at 6–26 (LGAIATALFVFIPCVFLILLY) threads the bilayer.

Belongs to the PsbM family. PSII is composed of 1 copy each of membrane proteins PsbA, PsbB, PsbC, PsbD, PsbE, PsbF, PsbH, PsbI, PsbJ, PsbK, PsbL, PsbM, PsbT, PsbX, PsbY, PsbZ, Psb30/Ycf12, peripheral proteins PsbO, CyanoQ (PsbQ), PsbU, PsbV and a large number of cofactors. It forms dimeric complexes.

The protein resides in the cellular thylakoid membrane. Its function is as follows. One of the components of the core complex of photosystem II (PSII). PSII is a light-driven water:plastoquinone oxidoreductase that uses light energy to abstract electrons from H(2)O, generating O(2) and a proton gradient subsequently used for ATP formation. It consists of a core antenna complex that captures photons, and an electron transfer chain that converts photonic excitation into a charge separation. This subunit is found at the monomer-monomer interface. This Acaryochloris marina (strain MBIC 11017) protein is Photosystem II reaction center protein M.